The sequence spans 154 residues: Endoribonuclease YbeY (154 aa).

Residues His-113, His-117, and His-123 each coordinate Zn(2+).

The protein belongs to the endoribonuclease YbeY family. It depends on Zn(2+) as a cofactor.

Its subcellular location is the cytoplasm. Functionally, single strand-specific metallo-endoribonuclease involved in late-stage 70S ribosome quality control and in maturation of the 3' terminus of the 16S rRNA. The sequence is that of Endoribonuclease YbeY from Verminephrobacter eiseniae (strain EF01-2).